We begin with the raw amino-acid sequence, 329 residues long: Glutamyl-tRNA reductase (329 aa).

Substrate-binding positions include 51-54 (TCLR), serine 99, 104-106 (EDQ), and glutamine 110. Cysteine 52 functions as the Nucleophile in the catalytic mechanism. An NADP(+)-binding site is contributed by 179 to 184 (GIGELA).

Belongs to the glutamyl-tRNA reductase family. As to quaternary structure, homodimer.

The enzyme catalyses (S)-4-amino-5-oxopentanoate + tRNA(Glu) + NADP(+) = L-glutamyl-tRNA(Glu) + NADPH + H(+). The protein operates within porphyrin-containing compound metabolism; protoporphyrin-IX biosynthesis; 5-aminolevulinate from L-glutamyl-tRNA(Glu): step 1/2. Catalyzes the NADPH-dependent reduction of glutamyl-tRNA(Glu) to glutamate 1-semialdehyde (GSA). In Fusobacterium nucleatum subsp. nucleatum (strain ATCC 25586 / DSM 15643 / BCRC 10681 / CIP 101130 / JCM 8532 / KCTC 2640 / LMG 13131 / VPI 4355), this protein is Glutamyl-tRNA reductase.